A 150-amino-acid chain; its full sequence is MQIILLEKVTNLGNLGDVVRVKDGFARNFLIPQRKARRATEAAIADFAVRRAELEKLAAEKLAAAEAVGTKLKDLVLEIGQKAGVDGRLFGSVTNHDIADALKAKGFTIEKSSVRMPTGPLKMVGDHPVAVAVHTDVVADITIRVVGEQA.

It belongs to the bacterial ribosomal protein bL9 family.

Binds to the 23S rRNA. This chain is Large ribosomal subunit protein bL9, found in Polynucleobacter asymbioticus (strain DSM 18221 / CIP 109841 / QLW-P1DMWA-1) (Polynucleobacter necessarius subsp. asymbioticus).